Consider the following 192-residue polypeptide: MSSKEQKTPNEQVSEEMENTAEQQVEATQETGECVDPRVAELEVQLSDALQRERESLLRAKAEVENIRRRTELDVEKAHKFALERFSSELLPVIDNLERALDTADKTNTELISMIEGVELTLKSLLDAVGKFGIEVVGETHVPFNPEVHQAMTMLESADHEPNHVMMVMQKGYTLNGRLLRPAMVAVSKAKS.

The tract at residues 1 to 34 (MSSKEQKTPNEQVSEEMENTAEQQVEATQETGEC) is disordered. Over residues 20–31 (TAEQQVEATQET) the composition is skewed to polar residues.

The protein belongs to the GrpE family. As to quaternary structure, homodimer.

The protein resides in the cytoplasm. Functionally, participates actively in the response to hyperosmotic and heat shock by preventing the aggregation of stress-denatured proteins, in association with DnaK and GrpE. It is the nucleotide exchange factor for DnaK and may function as a thermosensor. Unfolded proteins bind initially to DnaJ; upon interaction with the DnaJ-bound protein, DnaK hydrolyzes its bound ATP, resulting in the formation of a stable complex. GrpE releases ADP from DnaK; ATP binding to DnaK triggers the release of the substrate protein, thus completing the reaction cycle. Several rounds of ATP-dependent interactions between DnaJ, DnaK and GrpE are required for fully efficient folding. In Yersinia pestis, this protein is Protein GrpE.